The chain runs to 412 residues: Argininosuccinate synthase (412 aa).

ATP is bound by residues 16-24 (AYSGGLDTS) and Ala-44. Residues Tyr-96 and Ser-101 each coordinate L-citrulline. Gly-126 contributes to the ATP binding site. Residues Thr-128, Asn-132, and Asp-133 each contribute to the L-aspartate site. Asn-132 is a binding site for L-citrulline. Positions 136, 185, 194, 270, and 282 each coordinate L-citrulline.

This sequence belongs to the argininosuccinate synthase family. Type 1 subfamily. Homotetramer.

It is found in the cytoplasm. It catalyses the reaction L-citrulline + L-aspartate + ATP = 2-(N(omega)-L-arginino)succinate + AMP + diphosphate + H(+). Its pathway is amino-acid biosynthesis; L-arginine biosynthesis; L-arginine from L-ornithine and carbamoyl phosphate: step 2/3. The sequence is that of Argininosuccinate synthase from Shewanella baltica (strain OS185).